Consider the following 79-residue polypeptide: Small ribosomal subunit protein eS17 (79 aa).

Belongs to the eukaryotic ribosomal protein eS17 family.

The chain is Small ribosomal subunit protein eS17 from Saccharolobus solfataricus (strain ATCC 35092 / DSM 1617 / JCM 11322 / P2) (Sulfolobus solfataricus).